Here is a 95-residue protein sequence, read N- to C-terminus: Aspartyl/glutamyl-tRNA(Asn/Gln) amidotransferase subunit C (95 aa).

This sequence belongs to the GatC family. Heterotrimer of A, B and C subunits.

The enzyme catalyses L-glutamyl-tRNA(Gln) + L-glutamine + ATP + H2O = L-glutaminyl-tRNA(Gln) + L-glutamate + ADP + phosphate + H(+). It catalyses the reaction L-aspartyl-tRNA(Asn) + L-glutamine + ATP + H2O = L-asparaginyl-tRNA(Asn) + L-glutamate + ADP + phosphate + 2 H(+). Its function is as follows. Allows the formation of correctly charged Asn-tRNA(Asn) or Gln-tRNA(Gln) through the transamidation of misacylated Asp-tRNA(Asn) or Glu-tRNA(Gln) in organisms which lack either or both of asparaginyl-tRNA or glutaminyl-tRNA synthetases. The reaction takes place in the presence of glutamine and ATP through an activated phospho-Asp-tRNA(Asn) or phospho-Glu-tRNA(Gln). In Syntrophus aciditrophicus (strain SB), this protein is Aspartyl/glutamyl-tRNA(Asn/Gln) amidotransferase subunit C.